The following is a 143-amino-acid chain: Putative pre-16S rRNA nuclease (143 aa).

It belongs to the YqgF nuclease family.

Its subcellular location is the cytoplasm. In terms of biological role, could be a nuclease involved in processing of the 5'-end of pre-16S rRNA. The protein is Putative pre-16S rRNA nuclease (ybeB) of Lactococcus lactis subsp. lactis (strain IL1403) (Streptococcus lactis).